Reading from the N-terminus, the 209-residue chain is Pyridoxine/pyridoxamine 5'-phosphate oxidase (209 aa).

Substrate contacts are provided by residues 5-8 and K63; that span reads REEY. Residues 58–63, 73–74, R79, K80, and Q102 contribute to the FMN site; these read RVVLLK and FT. Residues Y120, R124, and S128 each coordinate substrate. Residues 137-138 and W181 each bind FMN; that span reads QS. 187-189 provides a ligand contact to substrate; the sequence is RLH. R191 lines the FMN pocket.

This sequence belongs to the pyridoxamine 5'-phosphate oxidase family. As to quaternary structure, homodimer. FMN serves as cofactor.

It carries out the reaction pyridoxamine 5'-phosphate + O2 + H2O = pyridoxal 5'-phosphate + H2O2 + NH4(+). The enzyme catalyses pyridoxine 5'-phosphate + O2 = pyridoxal 5'-phosphate + H2O2. The protein operates within cofactor metabolism; pyridoxal 5'-phosphate salvage; pyridoxal 5'-phosphate from pyridoxamine 5'-phosphate: step 1/1. Its pathway is cofactor metabolism; pyridoxal 5'-phosphate salvage; pyridoxal 5'-phosphate from pyridoxine 5'-phosphate: step 1/1. Catalyzes the oxidation of either pyridoxine 5'-phosphate (PNP) or pyridoxamine 5'-phosphate (PMP) into pyridoxal 5'-phosphate (PLP). The polypeptide is Pyridoxine/pyridoxamine 5'-phosphate oxidase (Alcanivorax borkumensis (strain ATCC 700651 / DSM 11573 / NCIMB 13689 / SK2)).